The sequence spans 280 residues: Acetylglutamate kinase (280 aa).

Substrate is bound by residues 57 to 58 (GG), Arg79, and Asn174.

This sequence belongs to the acetylglutamate kinase family. ArgB subfamily.

The protein resides in the cytoplasm. It carries out the reaction N-acetyl-L-glutamate + ATP = N-acetyl-L-glutamyl 5-phosphate + ADP. It functions in the pathway amino-acid biosynthesis; L-arginine biosynthesis; N(2)-acetyl-L-ornithine from L-glutamate: step 2/4. Functionally, catalyzes the ATP-dependent phosphorylation of N-acetyl-L-glutamate. The chain is Acetylglutamate kinase from Helicobacter hepaticus (strain ATCC 51449 / 3B1).